A 512-amino-acid chain; its full sequence is 2-isopropylmalate synthase (512 aa).

In terms of domain architecture, Pyruvate carboxyltransferase spans 5–268; sequence LIIFDTTLRD…DIGIDTQQIL (264 aa). The Mn(2+) site is built by aspartate 14, histidine 202, histidine 204, and asparagine 239. A regulatory domain region spans residues 394–512; that stretch reads GFVSLSQHSE…SKADRVAAQG (119 aa).

Belongs to the alpha-IPM synthase/homocitrate synthase family. LeuA type 1 subfamily. In terms of assembly, homodimer. It depends on Mn(2+) as a cofactor.

It is found in the cytoplasm. It catalyses the reaction 3-methyl-2-oxobutanoate + acetyl-CoA + H2O = (2S)-2-isopropylmalate + CoA + H(+). It participates in amino-acid biosynthesis; L-leucine biosynthesis; L-leucine from 3-methyl-2-oxobutanoate: step 1/4. In terms of biological role, catalyzes the condensation of the acetyl group of acetyl-CoA with 3-methyl-2-oxobutanoate (2-ketoisovalerate) to form 3-carboxy-3-hydroxy-4-methylpentanoate (2-isopropylmalate). The sequence is that of 2-isopropylmalate synthase from Polaromonas naphthalenivorans (strain CJ2).